The chain runs to 320 residues: Homoserine kinase (320 aa).

100–110 contributes to the ATP binding site; that stretch reads PLSSGMGSSAA.

This sequence belongs to the GHMP kinase family. Homoserine kinase subfamily.

The protein localises to the cytoplasm. It carries out the reaction L-homoserine + ATP = O-phospho-L-homoserine + ADP + H(+). The protein operates within amino-acid biosynthesis; L-threonine biosynthesis; L-threonine from L-aspartate: step 4/5. In terms of biological role, catalyzes the ATP-dependent phosphorylation of L-homoserine to L-homoserine phosphate. The sequence is that of Homoserine kinase from Chlorobium phaeobacteroides (strain DSM 266 / SMG 266 / 2430).